Reading from the N-terminus, the 279-residue chain is Shikimate dehydrogenase (NADP(+)) (279 aa).

Residues 18 to 20 (SRS) and threonine 64 contribute to the shikimate site. Lysine 68 (proton acceptor) is an active-site residue. Glutamate 80 provides a ligand contact to NADP(+). Shikimate-binding residues include asparagine 89 and aspartate 104. Residues 129 to 133 (GAGGA), 153 to 158 (NRTVSR), and isoleucine 218 each bind NADP(+). Tyrosine 220 contributes to the shikimate binding site. Residue glycine 241 participates in NADP(+) binding.

The protein belongs to the shikimate dehydrogenase family. As to quaternary structure, homodimer.

It catalyses the reaction shikimate + NADP(+) = 3-dehydroshikimate + NADPH + H(+). It participates in metabolic intermediate biosynthesis; chorismate biosynthesis; chorismate from D-erythrose 4-phosphate and phosphoenolpyruvate: step 4/7. Functionally, involved in the biosynthesis of the chorismate, which leads to the biosynthesis of aromatic amino acids. Catalyzes the reversible NADPH linked reduction of 3-dehydroshikimate (DHSA) to yield shikimate (SA). In Chelativorans sp. (strain BNC1), this protein is Shikimate dehydrogenase (NADP(+)).